The chain runs to 235 residues: 2-C-methyl-D-erythritol 4-phosphate cytidylyltransferase (235 aa).

This sequence belongs to the IspD/TarI cytidylyltransferase family. IspD subfamily. In terms of assembly, homodimer.

It carries out the reaction 2-C-methyl-D-erythritol 4-phosphate + CTP + H(+) = 4-CDP-2-C-methyl-D-erythritol + diphosphate. The protein operates within isoprenoid biosynthesis; isopentenyl diphosphate biosynthesis via DXP pathway; isopentenyl diphosphate from 1-deoxy-D-xylulose 5-phosphate: step 2/6. Catalyzes the formation of 4-diphosphocytidyl-2-C-methyl-D-erythritol from CTP and 2-C-methyl-D-erythritol 4-phosphate (MEP). The protein is 2-C-methyl-D-erythritol 4-phosphate cytidylyltransferase of Blochmanniella pennsylvanica (strain BPEN).